The chain runs to 276 residues: Large ribosomal subunit protein uL2 (276 aa).

Disordered regions lie at residues 30–57 and 219–276; these read EKSL…QGGG and TVRG…RSKK.

It belongs to the universal ribosomal protein uL2 family. Part of the 50S ribosomal subunit. Forms a bridge to the 30S subunit in the 70S ribosome.

Its function is as follows. One of the primary rRNA binding proteins. Required for association of the 30S and 50S subunits to form the 70S ribosome, for tRNA binding and peptide bond formation. It has been suggested to have peptidyltransferase activity; this is somewhat controversial. Makes several contacts with the 16S rRNA in the 70S ribosome. In Exiguobacterium sibiricum (strain DSM 17290 / CCUG 55495 / CIP 109462 / JCM 13490 / 255-15), this protein is Large ribosomal subunit protein uL2.